The primary structure comprises 307 residues: UDP-N-acetylenolpyruvoylglucosamine reductase (307 aa).

In terms of domain architecture, FAD-binding PCMH-type spans 33-197; the sequence is TGGNADFYIT…LEAAFTLAPG (165 aa). Arginine 176 is a catalytic residue. The active-site Proton donor is serine 226. The active site involves glutamate 296.

Belongs to the MurB family. Requires FAD as cofactor.

The protein localises to the cytoplasm. It catalyses the reaction UDP-N-acetyl-alpha-D-muramate + NADP(+) = UDP-N-acetyl-3-O-(1-carboxyvinyl)-alpha-D-glucosamine + NADPH + H(+). The protein operates within cell wall biogenesis; peptidoglycan biosynthesis. In terms of biological role, cell wall formation. This Staphylococcus aureus (strain MRSA252) protein is UDP-N-acetylenolpyruvoylglucosamine reductase.